We begin with the raw amino-acid sequence, 228 residues long: 2-C-methyl-D-erythritol 4-phosphate cytidylyltransferase (228 aa).

The protein belongs to the IspD/TarI cytidylyltransferase family. IspD subfamily.

It carries out the reaction 2-C-methyl-D-erythritol 4-phosphate + CTP + H(+) = 4-CDP-2-C-methyl-D-erythritol + diphosphate. It participates in isoprenoid biosynthesis; isopentenyl diphosphate biosynthesis via DXP pathway; isopentenyl diphosphate from 1-deoxy-D-xylulose 5-phosphate: step 2/6. Functionally, catalyzes the formation of 4-diphosphocytidyl-2-C-methyl-D-erythritol from CTP and 2-C-methyl-D-erythritol 4-phosphate (MEP). The protein is 2-C-methyl-D-erythritol 4-phosphate cytidylyltransferase of Trichormus variabilis (strain ATCC 29413 / PCC 7937) (Anabaena variabilis).